Reading from the N-terminus, the 100-residue chain is Urease subunit gamma (100 aa).

The protein belongs to the urease gamma subunit family. As to quaternary structure, heterotrimer of UreA (gamma), UreB (beta) and UreC (alpha) subunits. Three heterotrimers associate to form the active enzyme.

Its subcellular location is the cytoplasm. It catalyses the reaction urea + 2 H2O + H(+) = hydrogencarbonate + 2 NH4(+). It participates in nitrogen metabolism; urea degradation; CO(2) and NH(3) from urea (urease route): step 1/1. This chain is Urease subunit gamma, found in Cupriavidus pinatubonensis (strain JMP 134 / LMG 1197) (Cupriavidus necator (strain JMP 134)).